A 286-amino-acid chain; its full sequence is Prepilin leader peptidase/N-methyltransferase (286 aa).

The helical transmembrane segment at 11-31 (LGIFFVGLFSLMVGSFLNVVI) threads the bilayer. The Zn(2+) site is built by C74, C77, C99, and C102. 6 helical membrane-spanning segments follow: residues 106–126 (ISAR…IVAF), 132–152 (LSLG…FIDA), 161–181 (LTLP…FINL), 185–205 (VIGA…FKLI), 231–251 (LPII…GIGL), and 257–277 (MPFG…GAQI).

Belongs to the peptidase A24 family. The cofactor is Zn(2+).

The protein resides in the cell inner membrane. It carries out the reaction Typically cleaves a -Gly-|-Phe- bond to release an N-terminal, basic peptide of 5-8 residues from type IV prepilin, and then N-methylates the new N-terminal amino group, the methyl donor being S-adenosyl-L-methionine.. In terms of biological role, plays an essential role in type IV pili and type II pseudopili formation by proteolytically removing the leader sequence from substrate proteins and subsequently monomethylating the alpha-amino group of the newly exposed N-terminal phenylalanine. The chain is Prepilin leader peptidase/N-methyltransferase (fimP) from Dichelobacter nodosus (Bacteroides nodosus).